A 1164-amino-acid chain; its full sequence is Avirulence protein AvrBs3 (1164 aa).

Disordered regions lie at residues 1–68 (MDPI…SAGS) and 128–152 (ARPP…PAAQ). Positions 131-141 (PRAKPAPRRRA) are enriched in basic residues. Residues 142-151 (AQPSDASPAA) are compositionally biased toward low complexity. A Cryptic repeat -1 repeat occupies 225–254 (IVGVGKQWSGARALEALLTVAGELRGPPLQ). Residues 255–288 (LDTGQLLKIAKRGGVTAVEAVHAWRNALTGAPLN) form a Cryptic repeat 0 repeat. Core repeat repeat units follow at residues 289 to 322 (LTPE…QAHG), 323 to 356 (LTPQ…QAHG), 357 to 390 (LTPQ…QAHG), 391 to 424 (LTPE…QAHG), 425 to 458 (LTPE…QAHG), 459 to 492 (LTPE…QAHG), 493 to 526 (LTPE…QAHG), 527 to 560 (LTPE…QAHG), 561 to 594 (LTPE…QAHG), 595 to 628 (LTPQ…QAHG), 629 to 662 (LTPE…QAHG), 663 to 696 (LTPE…QAHG), 697 to 730 (LTPE…QAHG), 731 to 764 (LTPE…QAHG), 765 to 798 (LTPE…QAHG), 799 to 832 (LTPQ…QAHG), and 833 to 866 (LTPE…QAHG). Residues 867-886 (LTPQQVVAIASNGGGRPALE) form a Core repeat 17.5 repeat. The short motif at 1021 to 1024 (KRAK) is the Nuclear localization signal NLS1 element. Basic and acidic residues predominate over residues 1048 to 1060 (DLDAPSPMHEGDQ). The disordered stretch occupies residues 1048–1091 (DLDAPSPMHEGDQTRASSRKRSRSDRAVTGPSAQQSFEVRVPEQ). The Nuclear localization signal NLS2 signature appears at 1067–1070 (KRSR). Positions 1104–1107 (KRPR) match the Nuclear localization signal NLS3 motif. An acidic activation domain AAD region spans residues 1135–1164 (QDEDPFAGAADDFPAFNEEELAWLMELLPQ).

It belongs to the transcription activator-like effector (TALE) family. As to quaternary structure, forms a homodimer in the plant cell cytoplasm, prior to nuclear import. Interacts with the plant cell importin alpha-1 (Caimp alpha-1) and importin alpha-2 (Caimp alpha-2) via the nuclear localization signal NLS2, but not via NLS3.

It is found in the secreted. It localises to the host nucleus. Functionally, avirulence protein. Acts as a transcription factor in C.annuum plants. In susceptible plants lacking the Bs3 resistance gene induces expression of a number of genes, including genes homologous to a family of auxin-induced genes, alpha-expansin genes, pectate lyase, anthocyanidin glucoside rhamnosyl transferase and at least one transcription factor, UPA20. Their expression leads to plant hypertrophy in mesophyll cells, probably mainly mediated by UPA20. In resistant plants induces the hypersensitive response (HR), by inducing transcription of plant Bs3 which induces HR; a mutated AvrBs3 missing repeats 11-14 does not induce expression of Bs3 but does induce Bs3-E, a Bs3 allele with a modified promoter. Binds DNA corresponding to the upa-box in sequence-specific manner. The chain is Avirulence protein AvrBs3 (avrBs3) from Xanthomonas euvesicatoria.